The following is a 436-amino-acid chain: Cyclin-A2-2 (436 aa).

It belongs to the cyclin family. Cyclin AB subfamily. Expressed in roots, stems, leaves, flowers and siliques.

This chain is Cyclin-A2-2 (CYCA2-2), found in Arabidopsis thaliana (Mouse-ear cress).